The primary structure comprises 231 residues: Fibrillarin-like rRNA/tRNA 2'-O-methyltransferase (231 aa).

S-adenosyl-L-methionine contacts are provided by residues 89–90, 108–109, 133–134, and 153–156; these read TT, EF, DA, and DIAQ.

Belongs to the methyltransferase superfamily. Fibrillarin family. Interacts with nop5. Component of box C/D small ribonucleoprotein (sRNP) particles that contain rpl7ae, FlpA and nop5, plus a guide RNA.

Functionally, involved in pre-rRNA and tRNA processing. Utilizes the methyl donor S-adenosyl-L-methionine to catalyze the site-specific 2'-hydroxyl methylation of ribose moieties in rRNA and tRNA. Site specificity is provided by a guide RNA that base pairs with the substrate. Methylation occurs at a characteristic distance from the sequence involved in base pairing with the guide RNA. This is Fibrillarin-like rRNA/tRNA 2'-O-methyltransferase from Sulfolobus acidocaldarius (strain ATCC 33909 / DSM 639 / JCM 8929 / NBRC 15157 / NCIMB 11770).